We begin with the raw amino-acid sequence, 1284 residues long: ABC multidrug transporter atrC (1284 aa).

The span at 1 to 11 (MKSTAESKETP) shows a compositional bias: basic and acidic residues. Residues 1-24 (MKSTAESKETPSQDESTTSVPCTE) form a disordered region. 6 helical membrane-spanning segments follow: residues 55–75 (AVAILAACASGAGIALQNLIF), 99–119 (AAELALYFVYLGIARLVLSYT), 178–198 (IGLLFQGLAAFVTAFIIAFVV), 203–223 (TLICICIPVATIGTTGVVAAV), 282–302 (LLGLLFSAEYTIIYLGYGLAF), and 320–340 (IFTVLLSVVIASINLTLLAPY). The ABC transmembrane type-1 1 domain maps to 55-346 (AVAILAACAS…LAPYSIEFSR (292 aa)). Positions 381 to 626 (VELENVTFSY…DGVYAGLVKI (246 aa)) constitute an ABC transporter 1 domain. Residues N385 and N401 are each glycosylated (N-linked (GlcNAc...) asparagine). Position 416–423 (416–423 (GQSGSGKS)) interacts with ATP. 2 N-linked (GlcNAc...) asparagine glycosylation sites follow: N488 and N632. Transmembrane regions (helical) follow at residues 705-725 (LVVLLGCLGGCAMYPGQAILM) and 745-765 (FYASMLIVLAAGCLICYLAVG). The ABC transmembrane type-1 2 domain occupies 705–992 (LVVLLGCLGG…LFQWSTSITK (288 aa)). The N-linked (GlcNAc...) asparagine glycan is linked to N800. 4 helical membrane passes run 824-844 (IALVVIAVLQVVTCGILAIAF), 846-866 (WKLGLVVVFGGIPPLVGAGMV), 931-951 (MICFGLTQCIEYWFQALGFWY), and 955-975 (LVSLGETSMYSFFVAFLSVFF). The N-linked (GlcNAc...) asparagine glycan is linked to N995. In terms of domain architecture, ABC transporter 2 spans 1027-1280 (IAMDNVRFSY…GGLYRRMCEA (254 aa)). 1062 to 1069 (GSSGCGKS) contacts ATP. N-linked (GlcNAc...) asparagine glycosylation is present at N1122.

Belongs to the ABC transporter superfamily. ABCB family. Multidrug resistance exporter (TC 3.A.1.201) subfamily.

Its subcellular location is the cell membrane. In terms of biological role, pleiotropic ABC efflux transporter involved in the protection of the cells against a wide range of toxic compounds. The chain is ABC multidrug transporter atrC from Emericella nidulans (strain FGSC A4 / ATCC 38163 / CBS 112.46 / NRRL 194 / M139) (Aspergillus nidulans).